We begin with the raw amino-acid sequence, 145 residues long: Deoxyuridine 5'-triphosphate nucleotidohydrolase (145 aa).

This sequence belongs to the dUTPase family. It depends on Mg(2+) as a cofactor.

It catalyses the reaction dUTP + H2O = dUMP + diphosphate + H(+). This enzyme is involved in nucleotide metabolism: it produces dUMP, the immediate precursor of thymidine nucleotides and it decreases the intracellular concentration of dUTP so that uracil cannot be incorporated into DNA. The protein is Deoxyuridine 5'-triphosphate nucleotidohydrolase (DUT) of Fowlpox virus (strain NVSL) (FPV).